The following is an 824-amino-acid chain: Dapper 1 (824 aa).

5 disordered regions span residues 1–34, 61–80, 131–150, 454–487, and 516–536; these read MKPI…QRTR, ALTP…GDTP, EEHL…LSDG, TSNV…ESTQ, and ASSS…SSSQ. The interval 2–343 is interaction with tcf7l1; the sequence is KPIPATPDHL…PVRTNKPRTS (342 aa). The span at 11-34 shows a compositional bias: basic and acidic residues; the sequence is LGQHQESPRRKDKGEAESERQRTR. Residues 19–47 adopt a coiled-coil conformation; the sequence is RRKDKGEAESERQRTRERLEATLAGLAEL. The span at 520–530 shows a compositional bias: basic and acidic residues; the sequence is FDERPPLDFKS. The short motif at 821–824 is the PDZ-binding element; it reads MTTV.

It belongs to the dapper family. Interacts with dbf4, dvl2 and tcf7l1.

The protein localises to the cytoplasm. It localises to the nucleus. In terms of biological role, involved in regulation of intracellular signaling pathways during development. Specifically thought to play a role in canonical and/or non-canonical Wnt signaling pathways through interaction with DSH (Dishevelled) family proteins. Binds to dvl2 and regulates the degradation of ctnnb1/beta-catenin, thereby modulating the transcriptional activation of target genes of the Wnt signaling pathway. May also bind to and directly stimulate the activity of tcf7l1. The sequence is that of Dapper 1 (dact1) from Xenopus tropicalis (Western clawed frog).